Consider the following 375-residue polypeptide: Delta(12) fatty acid dehydrogenase (375 aa).

The next 2 helical transmembrane spans lie at 54–74 (IIAYIFYFLADKYIPILPAPL) and 77–97 (LAWPLYWFCQASILTGLWVIG). A Histidine box-1 motif is present at residues 98-102 (HECGH). Residues 110–130 (WVDDTVGFILHSFLMTPYFSW) form a helical membrane-spanning segment. The Histidine box-2 signature appears at 134–138 (HRNHH). Helical transmembrane passes span 172-192 (LLIMFITFTLGFPLYLFTNIS), 218-238 (VLLSDLGLLAVLYGVKLAVAA), and 242-262 (AWVTCIYGIPVLGVFIFFDII). Positions 308–312 (HVMHH) match the Histidine box-3 motif.

The protein belongs to the fatty acid desaturase type 1 family. Fe cation is required as a cofactor. Seed.

The protein localises to the membrane. The catalysed reaction is a (9Z,12Z)-octadecadienoyl-containing glycerolipid + 2 Fe(II)-[cytochrome b5] + O2 + 2 H(+) = a (9Z)-octadec-9-en-12-ynoyl-containing glycerolipid + 2 Fe(III)-[cytochrome b5] + 2 H2O. The protein operates within lipid metabolism; polyunsaturated fatty acid biosynthesis. In terms of biological role, changes the delta-12 double bond of linoleic acid into a triple bond in the biosynthesis of crepenynic acid. The chain is Delta(12) fatty acid dehydrogenase from Crepis alpina (Hawksbeard).